The sequence spans 185 residues: Ribosome-recycling factor (185 aa).

Belongs to the RRF family.

The protein localises to the cytoplasm. In terms of biological role, responsible for the release of ribosomes from messenger RNA at the termination of protein biosynthesis. May increase the efficiency of translation by recycling ribosomes from one round of translation to another. This is Ribosome-recycling factor from Shewanella sp. (strain W3-18-1).